A 478-amino-acid chain; its full sequence is Phosphatidylinositol 4-kinase type 2-alpha (478 aa).

The residue at position 1 (methionine 1) is an N-acetylmethionine. Residues 1–57 are disordered; it reads MDETSPLVSPERAQPPEYTFPSVSGAHFPQVPGGAVRVAAAGSGPSPPCSPGHDRER. Phosphoserine occurs at positions 5, 9, 43, 46, and 50. Residues 31-44 are compositionally biased toward low complexity; sequence VPGGAVRVAAAGSG. One can recognise a PI3K/PI4K catalytic domain in the interval 123–452; that stretch reads SIYPERIYQG…VQMPPVIVET (330 aa). The tract at residues 129–135 is G-loop; sequence IYQGSSG. Residues 130–136 and lysine 151 contribute to the ATP site; that span reads YQGSSGS. Residues 156–158 are important for substrate binding; the sequence is EPY. The important for interaction with membranes stretch occupies residues 164 to 177; the sequence is KWTKWLQKLCCPCC. S-palmitoyl cysteine attachment occurs at residues cysteine 173, cysteine 174, cysteine 176, and cysteine 177. Residue 260-263 coordinates ATP; sequence QLFV. The important for interaction with membranes stretch occupies residues 267–275; that stretch reads KDADYWLRR. Residues 304-312 are catalytic loop; it reads RNTDRGNDN. The activation loop stretch occupies residues 343-363; sequence AIDNGLAFPLKHPDSWRAYPF. Residue aspartate 345 coordinates ATP. Positions 358 to 367 are important for interaction with membranes; that stretch reads WRAYPFYWAW. Serine 461 carries the post-translational modification Phosphoserine.

This sequence belongs to the PI3/PI4-kinase family. Type II PI4K subfamily. Associates with the BLOC-1 and the AP-3 complexes; the BLOC-1 complex is required for optimal binding of PI4K2A to the AP-3 complex. Interacts with BLOC1S5 and DTNBP1. Interacts with FOS; this interaction may enhance phosphatidylinositol phosphorylation activity. Interacts with ITCH. Interacts with ATG9A. Ubiquitinated by ITCH; this does not lead to proteasomal degradation. Post-translationally, palmitoylated. Palmitoylated by ZDHHC3 and ZDHHC7 in the CCPCC motif. Palmitoylation is cholesterol-dependent, and required for TGN localization. As to expression, detected in adult brain, especially in neurons in the cerebellum, brain cortex, dorsal root ganglion and spinal cord (at protein level).

It is found in the golgi apparatus. The protein localises to the trans-Golgi network membrane. The protein resides in the membrane raft. Its subcellular location is the endosome. It localises to the endosome membrane. It is found in the cytoplasmic vesicle. The protein localises to the cell projection. The protein resides in the dendrite. Its subcellular location is the presynaptic cell membrane. It localises to the synapse. It is found in the synaptosome. The protein localises to the mitochondrion. The protein resides in the membrane. Its subcellular location is the cell membrane. It localises to the perikaryon. It is found in the neuron projection. It carries out the reaction a 1,2-diacyl-sn-glycero-3-phospho-(1D-myo-inositol) + ATP = a 1,2-diacyl-sn-glycero-3-phospho-(1D-myo-inositol 4-phosphate) + ADP + H(+). Its function is as follows. Membrane-bound phosphatidylinositol-4 kinase (PI4-kinase) that catalyzes the phosphorylation of phosphatidylinositol (PI) to phosphatidylinositol 4-phosphate (PI4P), a lipid that plays important roles in endocytosis, Golgi function, protein sorting and membrane trafficking and is required for prolonged survival of neurons. Besides, phosphorylation of phosphatidylinositol (PI) to phosphatidylinositol 4-phosphate (PI4P) is the first committed step in the generation of phosphatidylinositol 4,5-bisphosphate (PIP2), a precursor of the second messenger inositol 1,4,5-trisphosphate (InsP3). This Rattus norvegicus (Rat) protein is Phosphatidylinositol 4-kinase type 2-alpha (Pi4k2a).